Here is a 108-residue protein sequence, read N- to C-terminus: L-rhamnose mutarotase (108 aa).

Tyrosine 18 is a binding site for substrate. The active-site Proton donor is histidine 22. Residues tyrosine 41 and 76–77 (WW) contribute to the substrate site.

Belongs to the rhamnose mutarotase family. In terms of assembly, homodimer.

Its subcellular location is the cytoplasm. It carries out the reaction alpha-L-rhamnose = beta-L-rhamnose. Its pathway is carbohydrate metabolism; L-rhamnose metabolism. Functionally, involved in the anomeric conversion of L-rhamnose. In Paraburkholderia phymatum (strain DSM 17167 / CIP 108236 / LMG 21445 / STM815) (Burkholderia phymatum), this protein is L-rhamnose mutarotase.